We begin with the raw amino-acid sequence, 481 residues long: Argininosuccinate lyase (481 aa).

This sequence belongs to the lyase 1 family. Argininosuccinate lyase subfamily.

Its subcellular location is the cytoplasm. It carries out the reaction 2-(N(omega)-L-arginino)succinate = fumarate + L-arginine. Its pathway is amino-acid biosynthesis; L-arginine biosynthesis; L-arginine from L-ornithine and carbamoyl phosphate: step 3/3. This Methanococcus maripaludis (strain C5 / ATCC BAA-1333) protein is Argininosuccinate lyase.